The primary structure comprises 511 residues: Exodeoxyribonuclease 7 large subunit (511 aa).

The protein belongs to the XseA family. As to quaternary structure, heterooligomer composed of large and small subunits.

Its subcellular location is the cytoplasm. The catalysed reaction is Exonucleolytic cleavage in either 5'- to 3'- or 3'- to 5'-direction to yield nucleoside 5'-phosphates.. In terms of biological role, bidirectionally degrades single-stranded DNA into large acid-insoluble oligonucleotides, which are then degraded further into small acid-soluble oligonucleotides. This chain is Exodeoxyribonuclease 7 large subunit, found in Brucella melitensis biotype 2 (strain ATCC 23457).